A 417-amino-acid chain; its full sequence is UDP-N-acetylmuramoylalanine--D-glutamate ligase (417 aa).

ATP is bound at residue 108 to 114; that stretch reads GSNGKTT.

It belongs to the MurCDEF family.

It localises to the cytoplasm. The catalysed reaction is UDP-N-acetyl-alpha-D-muramoyl-L-alanine + D-glutamate + ATP = UDP-N-acetyl-alpha-D-muramoyl-L-alanyl-D-glutamate + ADP + phosphate + H(+). It participates in cell wall biogenesis; peptidoglycan biosynthesis. Cell wall formation. Catalyzes the addition of glutamate to the nucleotide precursor UDP-N-acetylmuramoyl-L-alanine (UMA). The sequence is that of UDP-N-acetylmuramoylalanine--D-glutamate ligase from Chlamydia pneumoniae (Chlamydophila pneumoniae).